The chain runs to 141 residues: Vasotocin-neurophysin VT (141 aa).

Cysteine 1 and cysteine 6 are joined by a disulfide. Glycine amide is present on glycine 9. 7 disulfide bridges follow: cysteine 22–cysteine 66, cysteine 25–cysteine 39, cysteine 33–cysteine 56, cysteine 40–cysteine 46, cysteine 73–cysteine 85, cysteine 79–cysteine 97, and cysteine 86–cysteine 91. Asparagine 117 carries N-linked (GlcNAc...) asparagine glycosylation.

The protein belongs to the vasopressin/oxytocin family. Post-translationally, seven disulfide bonds are present in neurophysin.

The protein localises to the secreted. Its function is as follows. Vasotocin is an antidiuretic hormone. In Pelophylax lessonae (Pool frog), this protein is Vasotocin-neurophysin VT.